Reading from the N-terminus, the 202-residue chain is D-alanyl-D-alanine dipeptidase (202 aa).

The Zn(2+) site is built by H116 and D123. The active-site Proton donor/acceptor is E181. H184 is a binding site for Zn(2+).

It belongs to the peptidase M15D family. The cofactor is Zn(2+).

It carries out the reaction D-alanyl-D-alanine + H2O = 2 D-alanine. Functionally, catalyzes hydrolysis of the D-alanyl-D-alanine dipeptide. The polypeptide is D-alanyl-D-alanine dipeptidase (vanXB) (Enterococcus faecalis (strain ATCC 700802 / V583)).